Here is a 317-residue protein sequence, read N- to C-terminus: Fruit protein pKIWI502 (317 aa).

Residues 1 to 29 (MSITLSRPSLSRPSLSRHPSLTLHSSLSH) form a disordered region. In terms of domain architecture, FAD-binding FR-type spans 71-182 (YIWTPVPISR…TQIIGRGFDI (112 aa)).

This chain is Fruit protein pKIWI502, found in Actinidia deliciosa (Kiwi).